A 220-amino-acid chain; its full sequence is Iron-sulfur cluster repair protein YtfE (220 aa).

Belongs to the RIC family. YtfE subfamily. As to quaternary structure, homodimer.

It localises to the cytoplasm. In terms of biological role, di-iron-containing protein involved in the repair of iron-sulfur clusters damaged by oxidative and nitrosative stress conditions. This is Iron-sulfur cluster repair protein YtfE from Shigella boydii serotype 18 (strain CDC 3083-94 / BS512).